The chain runs to 600 residues: Spore coat protein SP96 (600 aa).

The region spanning 21 to 140 is the DSCP-N domain; it reads QSCSSYSGDN…DVCQCKGGQT (120 aa). A disordered region spans residues 139-178; the sequence is QTSGGSTTGSQTSGGSTSGGSTTGSQTSGGSTTGSQTSGS. Positions 161 to 178 are enriched in low complexity; it reads TGSQTSGGSTTGSQTSGS. Follistatin-like domains follow at residues 184-206, 220-243, 267-289, 297-319, 331-359, and 394-416; these read SCSN…AVCV, PCDT…AKCT, LCDN…AKCI, VCRN…PICV, TCND…AKCC, and PCSV…AVCL. The segment at 420 to 530 is disordered; it reads TTTTGSTSDS…ASSSSASSSS (111 aa).

Post-translationally, glycosylated; may contain fucose and GlcNAc-alpha-1-P-Ser.

The protein resides in the spore wall. The chain is Spore coat protein SP96 (cotA) from Dictyostelium discoideum (Social amoeba).